A 298-amino-acid polypeptide reads, in one-letter code: Protease HtpX homolog (298 aa).

Helical transmembrane passes span 5–25 (IFLF…VLSV) and 45–65 (MALL…SLAI). H155 serves as a coordination point for Zn(2+). E156 is a catalytic residue. Position 159 (H159) interacts with Zn(2+). A run of 2 helical transmembrane segments spans residues 170-190 (LLQG…AWIA) and 204-224 (FIAM…VVFA). Residue E230 participates in Zn(2+) binding.

It belongs to the peptidase M48B family. The cofactor is Zn(2+).

It localises to the cell membrane. This chain is Protease HtpX homolog, found in Bacillus subtilis (strain 168).